A 770-amino-acid polypeptide reads, in one-letter code: Penicillin-binding protein 1C (770 aa).

Over 1–8 the chain is Cytoplasmic; sequence MPRLLTKR. Residues 9-29 form a helical; Signal-anchor for type II membrane protein membrane-spanning segment; that stretch reads GCWITLAAAPFLLFLAAWGAD. Residues 30-770 are Periplasmic-facing; the sequence is KLWPLPLHEV…QIATVKFVMQ (741 aa). The segment at 43–213 is transglycosylase; the sequence is RVVVAQDGTP…SRLRPDRWPE (171 aa). Glu84 (proton donor; for transglycosylase activity) is an active-site residue. The transpeptidase stretch occupies residues 278–559; it reads AGLQRRLEEL…FASAVPLLNQ (282 aa). Ser342 acts as the Acyl-ester intermediate; for transpeptidase activity in catalysis.

In the N-terminal section; belongs to the glycosyltransferase 51 family. This sequence in the C-terminal section; belongs to the transpeptidase family.

Its subcellular location is the cell inner membrane. It catalyses the reaction [GlcNAc-(1-&gt;4)-Mur2Ac(oyl-L-Ala-gamma-D-Glu-L-Lys-D-Ala-D-Ala)](n)-di-trans,octa-cis-undecaprenyl diphosphate + beta-D-GlcNAc-(1-&gt;4)-Mur2Ac(oyl-L-Ala-gamma-D-Glu-L-Lys-D-Ala-D-Ala)-di-trans,octa-cis-undecaprenyl diphosphate = [GlcNAc-(1-&gt;4)-Mur2Ac(oyl-L-Ala-gamma-D-Glu-L-Lys-D-Ala-D-Ala)](n+1)-di-trans,octa-cis-undecaprenyl diphosphate + di-trans,octa-cis-undecaprenyl diphosphate + H(+). It participates in cell wall biogenesis; peptidoglycan biosynthesis. Its activity is regulated as follows. Transglycosylase activity can be inhibited by moenomycin. Functionally, cell wall formation. The enzyme has a penicillin-insensitive transglycosylase N-terminal domain (formation of linear glycan strands) and a transpeptidase C-terminal domain which may not be functional. This is Penicillin-binding protein 1C (pbpC) from Escherichia coli (strain K12).